The following is a 366-amino-acid chain: Ribonuclease P protein subunit drpp30 (366 aa).

Residues 265–366 are disordered; that stretch reads EDTQPTNNNI…DIDNNKRKRE (102 aa). The span at 275–290 shows a compositional bias: basic and acidic residues; sequence PHEKHINKESTGKETI. Composition is skewed to low complexity over residues 291–324 and 333–351; these read PKPTTTTTTTTTTTTTAKTKTPTPTPTTEKTPSI and TAKSNKKTTTNTTSTAQKQ. Over residues 352-366 the composition is skewed to basic and acidic residues; that stretch reads GKMDIDIDNNKRKRE.

The protein belongs to the eukaryotic/archaeal RNase P protein component 3 family.

The protein localises to the nucleus. The enzyme catalyses Endonucleolytic cleavage of RNA, removing 5'-extranucleotides from tRNA precursor.. Functionally, component of ribonuclease P, a protein complex that generates mature tRNA molecules by cleaving their 5'-ends. In Dictyostelium discoideum (Social amoeba), this protein is Ribonuclease P protein subunit drpp30 (drpp30).